The sequence spans 374 residues: Chaperone protein DnaJ (374 aa).

Residues 3 to 67 (DFYQILGVSR…ETRARYDQFG (65 aa)) form the J domain. The segment at 99–118 (GQSSQGGRSQRRGPQQGDDL) is disordered. The segment covering 103–115 (QGGRSQRRGPQQG) has biased composition (low complexity). The CR-type zinc finger occupies 132–214 (GQQREINIPH…CGGNGVKQVR (83 aa)). Zn(2+) contacts are provided by Cys-145, Cys-148, Cys-162, Cys-165, Cys-188, Cys-191, Cys-202, and Cys-205. 4 CXXCXGXG motif repeats span residues 145–152 (CEVCRGTG), 162–169 (CTTCGGSG), 188–195 (CPTCNGVG), and 202–209 (CTSCGGNG).

The protein belongs to the DnaJ family. In terms of assembly, homodimer. The cofactor is Zn(2+).

The protein resides in the cytoplasm. Participates actively in the response to hyperosmotic and heat shock by preventing the aggregation of stress-denatured proteins and by disaggregating proteins, also in an autonomous, DnaK-independent fashion. Unfolded proteins bind initially to DnaJ; upon interaction with the DnaJ-bound protein, DnaK hydrolyzes its bound ATP, resulting in the formation of a stable complex. GrpE releases ADP from DnaK; ATP binding to DnaK triggers the release of the substrate protein, thus completing the reaction cycle. Several rounds of ATP-dependent interactions between DnaJ, DnaK and GrpE are required for fully efficient folding. Also involved, together with DnaK and GrpE, in the DNA replication of plasmids through activation of initiation proteins. This chain is Chaperone protein DnaJ, found in Prochlorococcus marinus subsp. pastoris (strain CCMP1986 / NIES-2087 / MED4).